The chain runs to 274 residues: Diaminopimelate epimerase (274 aa).

The substrate site is built by N11, Q44, and N64. Catalysis depends on C73, which acts as the Proton donor. Substrate contacts are provided by residues 74–75 (GN), N157, N190, and 208–209 (ER). C217 (proton acceptor) is an active-site residue. Substrate is bound at residue 218–219 (GS).

Belongs to the diaminopimelate epimerase family. As to quaternary structure, homodimer.

The protein localises to the cytoplasm. It carries out the reaction (2S,6S)-2,6-diaminopimelate = meso-2,6-diaminopimelate. The protein operates within amino-acid biosynthesis; L-lysine biosynthesis via DAP pathway; DL-2,6-diaminopimelate from LL-2,6-diaminopimelate: step 1/1. Its function is as follows. Catalyzes the stereoinversion of LL-2,6-diaminopimelate (L,L-DAP) to meso-diaminopimelate (meso-DAP), a precursor of L-lysine and an essential component of the bacterial peptidoglycan. The protein is Diaminopimelate epimerase of Haemophilus influenzae (strain PittEE).